The following is a 316-amino-acid chain: MARRRKGRPVNGVILIDKPTGITSNDTLQKVKRIYFAEKAGHTGALDPLATGMLPICLGEATKFSQFLLDSDKRYRVVAKLGERTNTSDSDGEVVQTREVKVDRGQLERCIAKFRGTTDQIPSMFSALKYQGRPLYEYAREGIEVPRESRKITVYSIELLRFEGHEVEMEVHCSKALTFVRLPTILGEMLGCGAHVTYLRRTGVSNYPYENMVTIEDLEALLEQAHREERAPRELLDPLLMPMDSAVQDLPEVNMIPELADHVLHGQPVQVFGAPQDGIVRMTSGDERLFIGVGHIDDDGRVAPKRLVVFRDEEEK.

The active-site Nucleophile is the aspartate 47.

The protein belongs to the pseudouridine synthase TruB family. Type 1 subfamily.

The catalysed reaction is uridine(55) in tRNA = pseudouridine(55) in tRNA. Its function is as follows. Responsible for synthesis of pseudouridine from uracil-55 in the psi GC loop of transfer RNAs. In Aliivibrio fischeri (strain ATCC 700601 / ES114) (Vibrio fischeri), this protein is tRNA pseudouridine synthase B.